Here is a 423-residue protein sequence, read N- to C-terminus: G protein-activated inward rectifier potassium channel 2 (423 aa).

Over 1–89 (MAKLTESMTN…IFTTLVDLKW (89 aa)) the chain is Cytoplasmic. 2 positions are modified to phosphoserine: serine 16 and serine 23. A helical membrane pass occupies residues 90–114 (RFNLLIFVMVYTVTWLFFGMIWWLI). Residues 115 to 138 (AYIRGDMDHIEDPSWTPCVTNLNG) lie on the Extracellular side of the membrane. Positions 139–150 (FVSAFLFSIETE) form an intramembrane region, helical; Pore-forming. An intramembrane region (pore-forming) is located at residues 151-157 (TTIGYGY). The Selectivity filter motif lies at 152 to 157 (TIGYGY). Over 158–166 (RVITDKCPE) the chain is Extracellular. A helical transmembrane segment spans residues 167–188 (GIILLLIQSVLGSIVNAFMVGC). The Cytoplasmic segment spans residues 189 to 423 (MFVKISQPKK…VANLENESKV (235 aa)). The tract at residues 390 to 423 (NQHAELETEEEEKNLEEQTERNGDVANLENESKV) is disordered. Positions 420 to 423 (ESKV) match the PDZ-binding motif.

This sequence belongs to the inward rectifier-type potassium channel (TC 1.A.2.1) family. KCNJ6 subfamily. As to quaternary structure, associates with KCNJ3/GIRK1 or KCNJ5/GRIK4 to form a G-protein-activated heteromultimer pore-forming unit. The resulting inward current is much larger. Interacts (via PDZ-binding motif) with SNX27 (via PDZ domain); the interaction is required when endocytosed to prevent degradation in lysosomes and promote recycling to the plasma membrane. As to expression, most abundant in cerebellum, and to a lesser degree in islets and exocrine pancreas.

Its subcellular location is the membrane. The enzyme catalyses K(+)(in) = K(+)(out). Activated by phosphatidylinositol 4,5 biphosphate (PtdIns(4,5)P2). Functionally, inward rectifier potassium channels are characterized by a greater tendency to allow potassium to flow into the cell rather than out of it. Their voltage dependence is regulated by the concentration of extracellular potassium; as external potassium is raised, the voltage range of the channel opening shifts to more positive voltages. The inward rectification is mainly due to the blockage of outward current by internal magnesium. This potassium channel may be involved in the regulation of insulin secretion by glucose and/or neurotransmitters acting through G-protein-coupled receptors. The chain is G protein-activated inward rectifier potassium channel 2 (KCNJ6) from Homo sapiens (Human).